The following is a 255-amino-acid chain: Small ribosomal subunit protein eS1 (255 aa).

The span at Met1–Lys18 shows a compositional bias: basic residues. The segment at Met1 to Asp28 is disordered. N-acetylalanine; partial is present on Ala2. Over residues Arg19–Asp28 the composition is skewed to basic and acidic residues.

It belongs to the eukaryotic ribosomal protein eS1 family. As to quaternary structure, component of the small ribosomal subunit. Mature ribosomes consist of a small (40S) and a large (60S) subunit. The 40S subunit contains about 33 different proteins and 1 molecule of RNA (18S). The 60S subunit contains about 49 different proteins and 3 molecules of RNA (25S, 5.8S and 5S).

The protein localises to the cytoplasm. The polypeptide is Small ribosomal subunit protein eS1 (Paracoccidioides lutzii (strain ATCC MYA-826 / Pb01) (Paracoccidioides brasiliensis)).